Consider the following 561-residue polypeptide: Asparagine synthetase [glutamine-hydrolyzing] (561 aa).

The active-site For GATase activity is the C2. The Glutamine amidotransferase type-2 domain occupies 2–191 (CGIWALFGSD…PGHYEVLDLK (190 aa)). L-glutamine is bound by residues 49–53 (RLAVV), 75–77 (NGE), and D97. In terms of domain architecture, Asparagine synthetase spans 213–536 (HALYDNVEKL…PGRADWLSHY (324 aa)). Residues L256, I288, and 363 to 364 (SG) contribute to the ATP site. An N6-acetyllysine modification is found at K385. T545 is modified (phosphothreonine). A Phosphoserine modification is found at S557.

The enzyme catalyses L-aspartate + L-glutamine + ATP + H2O = L-asparagine + L-glutamate + AMP + diphosphate + H(+). It participates in amino-acid biosynthesis; L-asparagine biosynthesis; L-asparagine from L-aspartate (L-Gln route): step 1/1. The sequence is that of Asparagine synthetase [glutamine-hydrolyzing] (ASNS) from Homo sapiens (Human).